The following is a 205-amino-acid chain: MQRGKFITIDGVEGAGKSTQIDFICSYLAKKNINVVLTREPGGTKLGEKIRALLLSIDTQLMDNDTELLLIFAARNEHIKTKIIPALNRGDWVLSDRFTDASYAYQGGGRGLSIERIALLEQWVLQDFSPDVTLLLDVPVALGMLRIKSRSRKDRIELETNDFFNRVRDSYIKRSKQFPERIKLIDASQTLKETTQQIKVILQAL.

11 to 18 (GVEGAGKS) provides a ligand contact to ATP.

This sequence belongs to the thymidylate kinase family.

The catalysed reaction is dTMP + ATP = dTDP + ADP. Its function is as follows. Phosphorylation of dTMP to form dTDP in both de novo and salvage pathways of dTTP synthesis. In Vesicomyosocius okutanii subsp. Calyptogena okutanii (strain HA), this protein is Thymidylate kinase.